Here is a 405-residue protein sequence, read N- to C-terminus: L-carnitine CoA-transferase (405 aa).

2 residues coordinate CoA: lysine 97 and arginine 104. The Nucleophile role is filled by aspartate 169.

The protein belongs to the CoA-transferase III family. CaiB subfamily. In terms of assembly, homodimer.

The protein resides in the cytoplasm. It carries out the reaction crotonobetainyl-CoA + (R)-carnitine = crotonobetaine + (R)-carnitinyl-CoA. The enzyme catalyses 4-(trimethylamino)butanoyl-CoA + (R)-carnitine = (R)-carnitinyl-CoA + 4-(trimethylamino)butanoate. It functions in the pathway amine and polyamine metabolism; carnitine metabolism. In terms of biological role, catalyzes the reversible transfer of the CoA moiety from gamma-butyrobetainyl-CoA to L-carnitine to generate L-carnitinyl-CoA and gamma-butyrobetaine. Is also able to catalyze the reversible transfer of the CoA moiety from gamma-butyrobetainyl-CoA or L-carnitinyl-CoA to crotonobetaine to generate crotonobetainyl-CoA. This Salmonella enteritidis PT4 (strain P125109) protein is L-carnitine CoA-transferase.